We begin with the raw amino-acid sequence, 126 residues long: Spermidine export protein MdtJ (126 aa).

4 helical membrane passes run 1 to 21 (MMIYWIFLGLAIVAEIIGTLS), 32 to 52 (TGHIVMYFMITGSYIMLALAV), 55 to 75 (VALGVAYALWEGIGILIITVF), and 82 to 102 (ESLSPLKIAGLVTLVGGIMLV). Residues 104–126 (SGTRKPKKPNSPNRNSGEHHATA) are disordered.

Belongs to the drug/metabolite transporter (DMT) superfamily. Small multidrug resistance (SMR) (TC 2.A.7.1) family. MdtJ subfamily. Forms a complex with MdtI.

The protein resides in the cell inner membrane. Functionally, catalyzes the excretion of spermidine. This chain is Spermidine export protein MdtJ, found in Yersinia enterocolitica serotype O:8 / biotype 1B (strain NCTC 13174 / 8081).